Reading from the N-terminus, the 434-residue chain is Maintenance of mitochondrial morphology protein 1 (434 aa).

Over 1-105 the chain is Lumenal; sequence MEMSELLASE…SFSSQSFAEG (105 aa). Residues 106-126 traverse the membrane as a helical segment; sequence LIVGQLSVIVALIFVIKFFVF. The Cytoplasmic segment spans residues 127–434; that stretch reads SEGGTKTATA…DDSVSVKSND (308 aa). The SMP-LTD domain maps to 194 to 408; the sequence is SPESLDWFNV…EPRFQFVKLP (215 aa). The tract at residues 415–434 is disordered; sequence KNTRKEKTDTDDSVSVKSND.

It belongs to the MMM1 family. As to quaternary structure, homodimer. Component of the ER-mitochondria encounter structure (ERMES) or MDM complex, composed of MMM1, MDM10, MDM12 and MDM34. An MMM1 homodimer associates with one molecule of MDM12 on each side in a pairwise head-to-tail manner, and the SMP-LTD domains of MMM1 and MDM12 generate a continuous hydrophobic tunnel for phospholipid trafficking.

It is found in the endoplasmic reticulum membrane. Its function is as follows. Component of the ERMES/MDM complex, which serves as a molecular tether to connect the endoplasmic reticulum (ER) and mitochondria. Components of this complex are involved in the control of mitochondrial shape and protein biogenesis, and function in nonvesicular lipid trafficking between the ER and mitochondria. The MDM12-MMM1 subcomplex functions in the major beta-barrel assembly pathway that is responsible for biogenesis of all outer membrane beta-barrel proteins, and acts in a late step after the SAM complex. The MDM10-MDM12-MMM1 subcomplex further acts in the TOM40-specific pathway after the action of the MDM12-MMM1 complex. Essential for establishing and maintaining the structure of mitochondria and maintenance of mtDNA nucleoids. This Kluyveromyces lactis (strain ATCC 8585 / CBS 2359 / DSM 70799 / NBRC 1267 / NRRL Y-1140 / WM37) (Yeast) protein is Maintenance of mitochondrial morphology protein 1.